The following is a 148-amino-acid chain: Large ribosomal subunit protein bL9 (148 aa).

Belongs to the bacterial ribosomal protein bL9 family.

Binds to the 23S rRNA. In Listeria monocytogenes serotype 4a (strain HCC23), this protein is Large ribosomal subunit protein bL9.